An 857-amino-acid polypeptide reads, in one-letter code: Dimethylglycine dehydrogenase, mitochondrial (857 aa).

Residues 1 to 43 (MLRLGALRLRGLALRSSQGRPSSAGLREGQESPPSPPEWKDRA) constitute a mitochondrion transit peptide. A disordered region spans residues 15-39 (RSSQGRPSSAGLREGQESPPSPPEW). FAD is bound by residues 52–53 (CV), 73–74 (EK), and 80–88 (GSTWHAAGL). Histidine 84 carries the post-translational modification Tele-8alpha-FAD histidine. Lysine 107 carries the N6-acetyllysine modification. Lysine 141 is subject to N6-acetyllysine; alternate. N6-succinyllysine; alternate is present on lysine 141. An N6-acetyllysine modification is found at lysine 161. Valine 212 lines the FAD pocket. Lysine 216 carries the post-translational modification N6-acetyllysine. Residue tryptophan 244 participates in FAD binding. 2 positions are modified to N6-succinyllysine: lysine 310 and lysine 312. An N6-acetyllysine mark is found at lysine 328 and lysine 353. 390 to 395 (FGYGII) contributes to the FAD binding site. Residues lysine 427, lysine 469, and lysine 516 each carry the N6-acetyllysine; alternate modification. Lysine 427, lysine 469, and lysine 516 each carry N6-succinyllysine; alternate. 573–575 (ELT) contacts (6S)-5,6,7,8-tetrahydrofolate. Lysine 648 carries the N6-acetyllysine; alternate modification. Lysine 648 carries the post-translational modification N6-succinyllysine; alternate. Residues tyrosine 669, 676–678 (ELY), and tyrosine 737 each bind (6S)-5,6,7,8-tetrahydrofolate. Residue lysine 757 is modified to N6-acetyllysine. An N6-acetyllysine; alternate modification is found at lysine 786. Lysine 786 is modified (N6-succinyllysine; alternate). Lysine 788 is subject to N6-succinyllysine.

It belongs to the GcvT family. FAD is required as a cofactor.

It is found in the mitochondrion. The catalysed reaction is (6S)-5,6,7,8-tetrahydrofolyl-(gamma-L-Glu)(n) + N,N-dimethylglycine + oxidized [electron-transfer flavoprotein] + H(+) = (6R)-5,10-methylenetetrahydrofolyl-(gamma-L-Glu)(n) + sarcosine + reduced [electron-transfer flavoprotein]. The protein operates within amine and polyamine degradation; betaine degradation; sarcosine from betaine: step 2/2. Functionally, catalyzes the demethylation of N,N-dimethylglycine to sarcosine. Also has activity with sarcosine in vitro. This Rattus norvegicus (Rat) protein is Dimethylglycine dehydrogenase, mitochondrial (Dmgdh).